The primary structure comprises 279 residues: Pantothenate synthetase (279 aa).

26 to 33 is a binding site for ATP; sequence MGNLHEGH. H33 functions as the Proton donor in the catalytic mechanism. Q57 is a binding site for (R)-pantoate. Q57 provides a ligand contact to beta-alanine. 144–147 contributes to the ATP binding site; it reads GKKD. (R)-pantoate is bound at residue Q150. ATP contacts are provided by residues V173 and 181–184; that span reads LSSR.

Belongs to the pantothenate synthetase family. In terms of assembly, homodimer.

The protein localises to the cytoplasm. The catalysed reaction is (R)-pantoate + beta-alanine + ATP = (R)-pantothenate + AMP + diphosphate + H(+). It participates in cofactor biosynthesis; (R)-pantothenate biosynthesis; (R)-pantothenate from (R)-pantoate and beta-alanine: step 1/1. In terms of biological role, catalyzes the condensation of pantoate with beta-alanine in an ATP-dependent reaction via a pantoyl-adenylate intermediate. The polypeptide is Pantothenate synthetase (Burkholderia orbicola (strain MC0-3)).